Here is a 382-residue protein sequence, read N- to C-terminus: 1-deoxy-D-xylulose 5-phosphate reductoisomerase (382 aa).

NADPH is bound by residues T11, G12, S13, I14, and N123. K124 lines the 1-deoxy-D-xylulose 5-phosphate pocket. An NADPH-binding site is contributed by E125. D149 contacts Mn(2+). 1-deoxy-D-xylulose 5-phosphate contacts are provided by S150, E151, S173, and H196. E151 provides a ligand contact to Mn(2+). G202 contributes to the NADPH binding site. 1-deoxy-D-xylulose 5-phosphate is bound by residues S209, N214, K215, and E218. Position 218 (E218) interacts with Mn(2+).

This sequence belongs to the DXR family. It depends on Mg(2+) as a cofactor. Mn(2+) is required as a cofactor.

The catalysed reaction is 2-C-methyl-D-erythritol 4-phosphate + NADP(+) = 1-deoxy-D-xylulose 5-phosphate + NADPH + H(+). The protein operates within isoprenoid biosynthesis; isopentenyl diphosphate biosynthesis via DXP pathway; isopentenyl diphosphate from 1-deoxy-D-xylulose 5-phosphate: step 1/6. Its function is as follows. Catalyzes the NADPH-dependent rearrangement and reduction of 1-deoxy-D-xylulose-5-phosphate (DXP) to 2-C-methyl-D-erythritol 4-phosphate (MEP). In Phocaeicola vulgatus (strain ATCC 8482 / DSM 1447 / JCM 5826 / CCUG 4940 / NBRC 14291 / NCTC 11154) (Bacteroides vulgatus), this protein is 1-deoxy-D-xylulose 5-phosphate reductoisomerase.